Here is a 475-residue protein sequence, read N- to C-terminus: Bifunctional protein HldE (475 aa).

The interval 1 to 318 (MKITLPEFGK…ANALYTEQET (318 aa)) is ribokinase. 195–198 (NMSE) contributes to the ATP binding site. The active site involves aspartate 264. Residues 344-475 (MTNGCFDILH…DIIKTIRERG (132 aa)) are cytidylyltransferase.

This sequence in the N-terminal section; belongs to the carbohydrate kinase PfkB family. In the C-terminal section; belongs to the cytidylyltransferase family. As to quaternary structure, homodimer.

The enzyme catalyses D-glycero-beta-D-manno-heptose 7-phosphate + ATP = D-glycero-beta-D-manno-heptose 1,7-bisphosphate + ADP + H(+). The catalysed reaction is D-glycero-beta-D-manno-heptose 1-phosphate + ATP + H(+) = ADP-D-glycero-beta-D-manno-heptose + diphosphate. It functions in the pathway nucleotide-sugar biosynthesis; ADP-L-glycero-beta-D-manno-heptose biosynthesis; ADP-L-glycero-beta-D-manno-heptose from D-glycero-beta-D-manno-heptose 7-phosphate: step 1/4. The protein operates within nucleotide-sugar biosynthesis; ADP-L-glycero-beta-D-manno-heptose biosynthesis; ADP-L-glycero-beta-D-manno-heptose from D-glycero-beta-D-manno-heptose 7-phosphate: step 3/4. Its function is as follows. Catalyzes the phosphorylation of D-glycero-D-manno-heptose 7-phosphate at the C-1 position to selectively form D-glycero-beta-D-manno-heptose-1,7-bisphosphate. In terms of biological role, catalyzes the ADP transfer from ATP to D-glycero-beta-D-manno-heptose 1-phosphate, yielding ADP-D-glycero-beta-D-manno-heptose. The protein is Bifunctional protein HldE of Aeromonas salmonicida (strain A449).